A 423-amino-acid chain; its full sequence is MFEMRSANPIENFVVSKIHIRGLDFAASVENEITHMEIYESLNGLVSGMFMFKDSIGVVDTIRMTGFEAIDVEFASYVGEQANRVYQKSFRATGISRMPARTGGFETVLVRFTNNLLTLNDYVKRPYVFKKTSISNIIKAILDNLGDEKPEYEIETSLYQRDFVTKIGKPYDIIKSIVDHASTDVNNSCKFMFYEDRDSVKFASLGSIRDKEYEYIIRKGADTGDGKWTSGNTNTITALRVVVKEQSNMHEISSGLFGSRTYSHSLIRKKLTTKDVRRNDYIAQVGILNDRAHMYTNELEFASEVPETEQPLNSIQLLPNDGFYEHDNKHPLGSIHGVSLMEETYLKAKQIIVEIPGNTNITVGDVVFLDYHAVTGENHSSLDASGRWIVHELKHRVEPNSFITTLELSSDSSVNIAIAGSKK.

In terms of assembly, homotrimer. Interacts with gp5 trimer.

The protein resides in the virion. Baseplate protein that is part of the baseplate hub. Involved in the tail assembly. The sequence is that of Probable baseplate hub protein gp334 from Vibrio parahaemolyticus (KVP40).